The sequence spans 948 residues: Protocadherin alpha-2 (948 aa).

The first 22 residues, 1–22 (MASSIRRGRGAWTRLLSLLLLA), serve as a signal peptide directing secretion. Residues 23 to 697 (AWEVGSGQLR…GSEATLVDVN (675 aa)) are Extracellular-facing. Cadherin domains are found at residues 30-133 (QLRY…PPIF), 157-242 (ASDA…EPTF), 243-350 (AQSV…TPEV), 351-455 (SITS…APAF), 456-565 (AQPE…APAL), and 588-678 (GHVV…APKA). N-linked (GlcNAc...) asparagine glycosylation is found at N257, N265, N362, and N548. The chain crosses the membrane as a helical span at residues 698–718 (VYLIIAICAVSSLLVLTVLLY). At 719-948 (TALRCSVPPT…GNSTTDNSDQ (230 aa)) the chain is on the cytoplasmic side. The PXXP 1 repeat unit spans residues 734-737 (PGKP). Residues 734-892 (PGKPTLVCSS…PDKFIIPGSP (159 aa)) are 5 X 4 AA repeats of P-X-X-P. 3 disordered regions span residues 754–801 (RRQR…RQPN), 829–854 (GPGG…EVSP), and 868–948 (KYGP…NSDQ). Over residues 783–795 (AEEKQLSESEYVG) the composition is skewed to basic and acidic residues. 4 PXXP repeats span residues 797 to 800 (PRQP), 830 to 833 (PGGP), 871 to 874 (PGNP), and 889 to 892 (PGSP). Residues 907–921 (DKSDFITFGKKEETK) show a composition bias toward basic and acidic residues.

The protein resides in the cell membrane. In terms of biological role, potential calcium-dependent cell-adhesion protein. May be involved in the establishment and maintenance of specific neuronal connections in the brain. The chain is Protocadherin alpha-2 (PCDHA2) from Homo sapiens (Human).